The chain runs to 337 residues: tRNA dimethylallyltransferase (337 aa).

An ATP-binding site is contributed by 24–31 (GPTGAGKT). 26–31 (TGAGKT) is a binding site for substrate. 2 interaction with substrate tRNA regions span residues 49-52 (DSRQ) and 188-192 (QRAVR).

The protein belongs to the IPP transferase family. Monomer. Mg(2+) serves as cofactor.

The enzyme catalyses adenosine(37) in tRNA + dimethylallyl diphosphate = N(6)-dimethylallyladenosine(37) in tRNA + diphosphate. In terms of biological role, catalyzes the transfer of a dimethylallyl group onto the adenine at position 37 in tRNAs that read codons beginning with uridine, leading to the formation of N6-(dimethylallyl)adenosine (i(6)A). The protein is tRNA dimethylallyltransferase of Nitratidesulfovibrio vulgaris (strain DSM 19637 / Miyazaki F) (Desulfovibrio vulgaris).